The primary structure comprises 87 residues: Small ribosomal subunit protein uS15c (87 aa).

This sequence belongs to the universal ribosomal protein uS15 family. Part of the 30S ribosomal subunit.

It localises to the plastid. Its subcellular location is the chloroplast. The polypeptide is Small ribosomal subunit protein uS15c (rps15) (Coffea arabica (Arabian coffee)).